The following is a 242-amino-acid chain: Phosducin-like protein 2 (242 aa).

Residues 34–201 (VLRLQKEAMV…LEWKLAEVGA (168 aa)) enclose the Phosducin domain. Residues 89 to 242 (FGELREISGN…SSNSDSEDTK (154 aa)) form a thioredoxin fold region.

It belongs to the phosducin family. As to quaternary structure, interacts with the CCT chaperonin complex and actin.

The protein localises to the endoplasmic reticulum. Its function is as follows. Essential for male fertility, spermiogenesis and acrosome formation. The protein is Phosducin-like protein 2 (PDCL2) of Bos taurus (Bovine).